A 197-amino-acid chain; its full sequence is 3-isopropylmalate dehydratase small subunit (197 aa).

The protein belongs to the LeuD family. LeuD type 1 subfamily. Heterodimer of LeuC and LeuD.

The catalysed reaction is (2R,3S)-3-isopropylmalate = (2S)-2-isopropylmalate. Its pathway is amino-acid biosynthesis; L-leucine biosynthesis; L-leucine from 3-methyl-2-oxobutanoate: step 2/4. In terms of biological role, catalyzes the isomerization between 2-isopropylmalate and 3-isopropylmalate, via the formation of 2-isopropylmaleate. This is 3-isopropylmalate dehydratase small subunit from Streptomyces avermitilis (strain ATCC 31267 / DSM 46492 / JCM 5070 / NBRC 14893 / NCIMB 12804 / NRRL 8165 / MA-4680).